Consider the following 144-residue polypeptide: Large ribosomal subunit protein uL13 (144 aa).

The protein belongs to the universal ribosomal protein uL13 family. In terms of assembly, part of the 50S ribosomal subunit.

Functionally, this protein is one of the early assembly proteins of the 50S ribosomal subunit, although it is not seen to bind rRNA by itself. It is important during the early stages of 50S assembly. The sequence is that of Large ribosomal subunit protein uL13 from Desulfovibrio desulfuricans (strain ATCC 27774 / DSM 6949 / MB).